A 292-amino-acid chain; its full sequence is CCR4-NOT transcription complex subunit 8 (292 aa).

Residues aspartate 40, glutamate 42, aspartate 161, and aspartate 230 each coordinate a divalent metal cation.

It belongs to the CAF1 family. As to quaternary structure, component of the CCR4-NOT complex; distinct complexes seem to exist that differ in the participation of probably mutually exclusive catalytic subunits; the complex contains two deadenylase subunits, CNOT6 or CNOT6L, and CNOT7 or CNOT8. In the complex interacts directly with CNOT1. Interacts with BTG1, BTG2 and TOB1. Interacts with BTG4.

The protein resides in the cytoplasm. It is found in the nucleus. The catalysed reaction is Exonucleolytic cleavage of poly(A) to 5'-AMP.. Has 3'-5' poly(A) exoribonuclease activity for synthetic poly(A) RNA substrate. Its function seems to be partially redundant with that of CNOT7. Catalytic component of the CCR4-NOT complex which is linked to various cellular processes including bulk mRNA degradation, miRNA-mediated repression, translational repression during translational initiation and general transcription regulation. During miRNA-mediated repression the complex also seems to act as translational repressor during translational initiation. Additional complex functions may be a consequence of its influence on mRNA expression. Associates with members of the BTG family such as TOB1 and BTG2 and is required for their anti-proliferative activity. The protein is CCR4-NOT transcription complex subunit 8 (Cnot8) of Mus musculus (Mouse).